Consider the following 247-residue polypeptide: Triosephosphate isomerase (247 aa).

Substrate is bound at residue 9-11 (NWK). H94 serves as the catalytic Electrophile. The Proton acceptor role is filled by E165. Substrate contacts are provided by residues G171, S209, and 230–231 (GG).

This sequence belongs to the triosephosphate isomerase family. As to quaternary structure, homodimer.

The protein localises to the cytoplasm. It catalyses the reaction D-glyceraldehyde 3-phosphate = dihydroxyacetone phosphate. It functions in the pathway carbohydrate biosynthesis; gluconeogenesis. It participates in carbohydrate degradation; glycolysis; D-glyceraldehyde 3-phosphate from glycerone phosphate: step 1/1. Involved in the gluconeogenesis. Catalyzes stereospecifically the conversion of dihydroxyacetone phosphate (DHAP) to D-glyceraldehyde-3-phosphate (G3P). This Albidiferax ferrireducens (strain ATCC BAA-621 / DSM 15236 / T118) (Rhodoferax ferrireducens) protein is Triosephosphate isomerase.